The sequence spans 125 residues: Cu-Zn superoxide dismutase-like protein (125 aa).

Cys52 and Cys102 are disulfide-bonded.

It belongs to the Cu-Zn superoxide dismutase family.

It localises to the host cytoplasm. Functionally, virion protein with no enzymatic activity. The chain is Cu-Zn superoxide dismutase-like protein from Bos taurus (Bovine).